The following is a 206-amino-acid chain: LexA repressor (206 aa).

The H-T-H motif DNA-binding region spans 28–48 (VREIGEAVGLASSSTVHGHLD). Residues Ser128 and Lys166 each act as for autocatalytic cleavage activity in the active site.

The protein belongs to the peptidase S24 family. As to quaternary structure, homodimer.

It carries out the reaction Hydrolysis of Ala-|-Gly bond in repressor LexA.. In terms of biological role, represses a number of genes involved in the response to DNA damage (SOS response), including recA and lexA. In the presence of single-stranded DNA, RecA interacts with LexA causing an autocatalytic cleavage which disrupts the DNA-binding part of LexA, leading to derepression of the SOS regulon and eventually DNA repair. The polypeptide is LexA repressor (Exiguobacterium sp. (strain ATCC BAA-1283 / AT1b)).